The chain runs to 349 residues: Serine/threonine-protein kinase SRK2A (349 aa).

In terms of domain architecture, Protein kinase spans 12 to 268; the sequence is YELVKDIGSG…IQEIKNHEWF (257 aa). ATP contacts are provided by residues 18 to 26 and Lys41; that span reads IGSGNFGVA. The active-site Proton acceptor is Asp131. The tract at residues 151-177 is activation loop; it reads DFGYSKSSLLHSQPKSTVGTPAYIAPE.

It belongs to the protein kinase superfamily. Ser/Thr protein kinase family.

The enzyme catalyses L-seryl-[protein] + ATP = O-phospho-L-seryl-[protein] + ADP + H(+). It carries out the reaction L-threonyl-[protein] + ATP = O-phospho-L-threonyl-[protein] + ADP + H(+). Activated by osmotic stress and by abscisic acid (ABA). Activation by NaCl is dependent on ABA. In terms of biological role, involved in early responses to osmotic stress. The protein is Serine/threonine-protein kinase SRK2A of Physcomitrium patens (Spreading-leaved earth moss).